The chain runs to 984 residues: MQEHLVVTLDGKDYLVEPGTNLLEFIKSQDTFVPSICYNESMGPIQTCDTCTVEIDGKIERSCSTVIDRPMTVNTVNNDVKDAQKEALDRILEKHMLYCTVCDYNNGDCEIHNTMDAWGLQHQTYEYKEKPYEKDYGPFYRYDPNQCILCGRCVEACQDIEVNETIRIDWDREHPRVIWDNDVPINESSCVSCGQCATVCPCNAMMEVNMEGNAGYMTDTEPGSLAAMIDLTKKAEPGYGPLFAISDSEAEMRKERIKKTKTVCTYCGVGCSFEVWTKDREILKVQPSHDSPANKIATCVKGKFSWGHINSDQRLTKPLVRKNGEFHEVEWDEALNVIADNFTSIKEKYGPDALSFISSSKATNEESYLMQKLARQVIGTNNVDNCSRYCQAPATKGLFRTVGHGGDSGSIEDLEKAAMSVLIGTNTAEAHPVIASRMKRAQKLFGQKIHVFDIRKHEMAERADRFYQPKPGTDLAWLSAVTKYIIDHDLHDKAFIDEWVDDFDEYYKSLETFTMAFAEEATGIPESELIKFAEECAKAESVVICWAMGITQQDIGSDSSTAISNLLLVTGNYRRPGTGAYPLRGHNNVQGCSDMGSMPDKITGYQSIEADDIRAKFEKEYGVKLNPKAGKDNHEMVEGIHDGEVHSLYLYGEDTGIVDSNINFVQAAFEKLDFMVVQDEFLTFTATYADVVLPASPSLEKDGTFTNTERRIQRLYQALEPLGDSKPDWKIFQAIANRLGFDWNYKHPSEIMDEVARLTPLYAGVSYDRLEGFNSLQWPVQPDGTDEPILYLEGFNFDNGKAKLFPLSFDNYFKQDEIYDIHVNNGRLLEHFHEGNMTYQTPMIKYKVPRAFVEISPELAEDRGIHEGAEVKLISETGEAVLQVHVTDRVKGKEIYIPLNNDAMENGDLGAINLLTNSDVDQYTDTPSYKRTSCRLEVITKRGKSPLNPNNFRVNKKRHPQYSVQVQKKWERSDYVFPGNQVDK.

Residues 3 to 79 enclose the 2Fe-2S ferredoxin-type domain; that stretch reads EHLVVTLDGK…PMTVNTVNND (77 aa). Cysteine 37, cysteine 48, cysteine 51, and cysteine 63 together coordinate [2Fe-2S] cluster. Positions 79–119 constitute a 4Fe-4S His(Cys)3-ligated-type domain; that stretch reads DVKDAQKEALDRILEKHMLYCTVCDYNNGDCEIHNTMDAWG. Histidine 95, cysteine 99, cysteine 102, cysteine 109, cysteine 147, cysteine 150, cysteine 153, cysteine 157, cysteine 190, cysteine 193, cysteine 196, cysteine 200, cysteine 264, cysteine 267, cysteine 271, and cysteine 299 together coordinate [4Fe-4S] cluster. 2 4Fe-4S ferredoxin-type domains span residues 138 to 165 and 181 to 211; these read PFYR…VNET and NDVP…VNME. The tract at residues 252 to 984 is formate dehydrogenase; that stretch reads MRKERIKKTK…YVFPGNQVDK (733 aa). In terms of domain architecture, 4Fe-4S Mo/W bis-MGD-type spans 257-313; it reads IKKTKTVCTYCGVGCSFEVWTKDREILKVQPSHDSPANKIATCVKGKFSWGHINSDQ.

This sequence in the C-terminal section; belongs to the prokaryotic molybdopterin-containing oxidoreductase family. It depends on [2Fe-2S] cluster as a cofactor. [4Fe-4S] cluster serves as cofactor. Mo-bis(molybdopterin guanine dinucleotide) is required as a cofactor.

The catalysed reaction is formate + NAD(+) = CO2 + NADH. This Staphylococcus aureus (strain N315) protein is Putative formate dehydrogenase SA2102.